The chain runs to 473 residues: H(+)/Cl(-) exchange transporter ClcA (473 aa).

Residues 1 to 32 are Cytoplasmic-facing; the sequence is MKTDTSTFLAQQIVRLRRRDQIRRLMQRDKTP. A helical transmembrane segment spans residues 33–69; it reads LAILLMAAVVGTLTGLVGVAFEKAVSWVQNMRIGALV. The Periplasmic segment spans residues 70 to 76; sequence QVADHAF. Residues 77–100 form a helical membrane-spanning segment; the sequence is LLWPLAFILSALLAMVGYFLVRKF. The Selectivity filter part_1 signature appears at 106 to 110; that stretch reads GSGIP. Serine 107 provides a ligand contact to chloride. The helical intramembrane region spans 109–116; that stretch reads IPEIEGAL. Residues 117 to 123 lie on the Cytoplasmic side of the membrane; sequence EELRPVR. 2 consecutive transmembrane segments (helical) span residues 124–141 and 148–166; these read WWRV…TLGA and EGPT…LDVF. The short motif at 146 to 150 is the Selectivity filter part_2 element; that stretch reads GREGP. The Cytoplasmic portion of the chain corresponds to 167–176; it reads RMRSAEARHT. 2 intramembrane regions (helical) span residues 177-189 and 193-201; these read LLAT…LSAA and PLAGILFII. Topologically, residues 202-214 are cytoplasmic; sequence EEMRPQFRYNLIS. The chain crosses the membrane as a helical span at residues 215–232; it reads IKAVFTGVIMSSIVFRIF. Residues 233–252 lie on the Periplasmic side of the membrane; the sequence is NGEAPIIEVGKLSDAPVNTL. The chain crosses the membrane as a helical span at residues 253–281; that stretch reads WLYLILGIIFGCVGPVFNSLVLRTQDMFQ. Topologically, residues 282 to 287 are cytoplasmic; that stretch reads RFHGGE. Residues 288–309 traverse the membrane as a helical segment; the sequence is IKKWVLMGGAIGGLCGILGLIE. Over 310–329 the chain is Periplasmic; it reads PEAAGGGFNLIPIAAAGNFS. Transmembrane regions (helical) follow at residues 330–349 and 355–376; these read VGLL…LCFS and GIFA…MAAA. The Selectivity filter part_3 motif lies at 355 to 359; it reads GIFAP. Chloride contacts are provided by isoleucine 356 and phenylalanine 357. Topologically, residues 377 to 386 are periplasmic; sequence VLFPQYHLEA. An intramembrane region (helical) is located at residues 387 to 401; that stretch reads GTFAIAGMGALMAAS. Positions 402–404 form an intramembrane region, note=Loop between two helices; it reads VRA. The helical intramembrane region spans 405–416; sequence PLTGIVLVLEMT. The note=Loop between two helices intramembrane region spans 417–421; sequence DNYQL. The helical transmembrane segment at 422-438 threads the bilayer; the sequence is ILPMIITCLGATLLAQF. The Cytoplasmic portion of the chain corresponds to 439–473; sequence LGGKPLYSTILARTLAKQDAEQAAKNQNAPAGENT. Tyrosine 445 is a chloride binding site.

Belongs to the chloride channel (TC 2.A.49) family. ClcA subfamily. In terms of assembly, homodimer.

The protein resides in the cell inner membrane. The enzyme catalyses 2 chloride(in) + H(+)(out) = 2 chloride(out) + H(+)(in). Proton-coupled chloride transporter. Functions as antiport system and exchanges two chloride ions for 1 proton. Probably acts as an electrical shunt for an outwardly-directed proton pump that is linked to amino acid decarboxylation, as part of the extreme acid resistance (XAR) response. The polypeptide is H(+)/Cl(-) exchange transporter ClcA (Salmonella newport (strain SL254)).